A 110-amino-acid polypeptide reads, in one-letter code: Holo-[acyl-carrier-protein] synthase (110 aa).

Residues D8 and E54 each contribute to the Mg(2+) site.

Belongs to the P-Pant transferase superfamily. AcpS family. Mg(2+) is required as a cofactor.

The protein localises to the cytoplasm. It carries out the reaction apo-[ACP] + CoA = holo-[ACP] + adenosine 3',5'-bisphosphate + H(+). Functionally, transfers the 4'-phosphopantetheine moiety from coenzyme A to a Ser of acyl-carrier-protein. The protein is Holo-[acyl-carrier-protein] synthase of Mycoplasma mycoides subsp. mycoides SC (strain CCUG 32753 / NCTC 10114 / PG1).